The sequence spans 320 residues: Acetyl-coenzyme A carboxylase carboxyl transferase subunit alpha (320 aa).

The 255-residue stretch at 34–288 (RLEEALEAAR…GEALERVLAG (255 aa)) folds into the CoA carboxyltransferase C-terminal domain.

Belongs to the AccA family. Acetyl-CoA carboxylase is a heterohexamer composed of biotin carboxyl carrier protein (AccB), biotin carboxylase (AccC) and two subunits each of ACCase subunit alpha (AccA) and ACCase subunit beta (AccD).

The protein resides in the cytoplasm. It carries out the reaction N(6)-carboxybiotinyl-L-lysyl-[protein] + acetyl-CoA = N(6)-biotinyl-L-lysyl-[protein] + malonyl-CoA. The protein operates within lipid metabolism; malonyl-CoA biosynthesis; malonyl-CoA from acetyl-CoA: step 1/1. Its function is as follows. Component of the acetyl coenzyme A carboxylase (ACC) complex. First, biotin carboxylase catalyzes the carboxylation of biotin on its carrier protein (BCCP) and then the CO(2) group is transferred by the carboxyltransferase to acetyl-CoA to form malonyl-CoA. The polypeptide is Acetyl-coenzyme A carboxylase carboxyl transferase subunit alpha (Rubrobacter xylanophilus (strain DSM 9941 / JCM 11954 / NBRC 16129 / PRD-1)).